A 348-amino-acid polypeptide reads, in one-letter code: Dihydroorotase (348 aa).

Positions 17 and 19 each coordinate Zn(2+). Substrate contacts are provided by residues 19–21 (HLR) and Asn-45. Zn(2+) is bound by residues Lys-103, His-140, and His-178. N6-carboxylysine is present on Lys-103. His-140 is a substrate binding site. Leu-223 lines the substrate pocket. Residue Asp-251 participates in Zn(2+) binding. Asp-251 is a catalytic residue. Substrate-binding residues include His-255 and Ala-267.

Belongs to the metallo-dependent hydrolases superfamily. DHOase family. Class II DHOase subfamily. In terms of assembly, homodimer. Zn(2+) serves as cofactor.

The enzyme catalyses (S)-dihydroorotate + H2O = N-carbamoyl-L-aspartate + H(+). It participates in pyrimidine metabolism; UMP biosynthesis via de novo pathway; (S)-dihydroorotate from bicarbonate: step 3/3. In terms of biological role, catalyzes the reversible cyclization of carbamoyl aspartate to dihydroorotate. The protein is Dihydroorotase of Salmonella dublin (strain CT_02021853).